A 342-amino-acid chain; its full sequence is RNA 3'-terminal phosphate cyclase (342 aa).

ATP-binding positions include Gln103 and 283–287 (YLADQ). His308 functions as the Tele-AMP-histidine intermediate in the catalytic mechanism.

It belongs to the RNA 3'-terminal cyclase family. Type 1 subfamily.

The protein resides in the cytoplasm. The catalysed reaction is a 3'-end 3'-phospho-ribonucleotide-RNA + ATP = a 3'-end 2',3'-cyclophospho-ribonucleotide-RNA + AMP + diphosphate. Its function is as follows. Catalyzes the conversion of 3'-phosphate to a 2',3'-cyclic phosphodiester at the end of RNA. The mechanism of action of the enzyme occurs in 3 steps: (A) adenylation of the enzyme by ATP; (B) transfer of adenylate to an RNA-N3'P to produce RNA-N3'PP5'A; (C) and attack of the adjacent 2'-hydroxyl on the 3'-phosphorus in the diester linkage to produce the cyclic end product. The biological role of this enzyme is unknown but it is likely to function in some aspects of cellular RNA processing. The polypeptide is RNA 3'-terminal phosphate cyclase (Shigella dysenteriae serotype 1 (strain Sd197)).